Consider the following 955-residue polypeptide: Reversion-inducing cysteine-rich protein with Kazal motifs (955 aa).

Positions 1–22 (MSGCLQILTVLLCCRFWALVFS) are cleaved as a signal peptide. Residues 28–75 (CVHHAADIPRCRDACEQLASIRSESRLRHLLHRLPSYCPETLSELWIC) form a Knot 1 repeat. Residues 28 to 326 (CVHHAADIPR…NPVEMDLITC (299 aa)) are 5 X Knot repeats. Residue N77 is glycosylated (N-linked (GlcNAc...) asparagine). Knot repeat units follow at residues 95 to 132 (CCEL…LYSC) and 142 to 188 (CCSY…LILC). Residue N191 is glycosylated (N-linked (GlcNAc...) asparagine). 2 Knot repeats span residues 207–254 (CCDR…LWQC) and 282–326 (CCFK…LITC). N-linked (GlcNAc...) asparagine glycans are attached at residues N287 and N375. 3 consecutive Kazal-like domains span residues 615-661 (LFTG…SCRS), 686-741 (DLSE…HCQD), and 742-778 (ACRR…RCHA). Cystine bridges form between C621-C646, C623-C642, C631-C659, C704-C724, and C713-C739. S931 carries the GPI-anchor amidated serine lipid modification. A propeptide spanning residues 932–955 (SCVSISVCVLLLLCSLILTLTSDL) is cleaved from the precursor.

This sequence belongs to the RECK family. In terms of assembly, interacts (via knot repeats) with wnt7a (via disordered linker region); the interaction is direct. Interacts (via knot repeats) with wnt7b (via disordered linker region); the interaction is direct. Interacts with adgra2; the interaction is direct. In terms of tissue distribution, expressed in the cerebral endothelium.

It localises to the cell membrane. Functions together with adgra2 to enable brain endothelial cells to selectively respond to Wnt7 signals (wnt7a or wnt7b). Plays a key role in Wnt7-specific responses: required for central nervous system (CNS) angiogenesis and blood-brain barrier regulation. Acts as a Wnt7-specific coactivator of canonical Wnt signaling by decoding Wnt ligands: acts by interacting specifically with the disordered linker region of Wnt7, thereby conferring ligand selectivity for Wnt7. Adgra2 is then required to deliver reck-bound Wnt7 to frizzled by assembling a higher-order RECK-ADGRA2-Fzd-LRP5-LRP6 complex. Also acts as a serine protease inhibitor. The sequence is that of Reversion-inducing cysteine-rich protein with Kazal motifs from Danio rerio (Zebrafish).